The primary structure comprises 177 residues: Cytidylate kinase (177 aa).

Position 8 to 16 (8 to 16) interacts with ATP; the sequence is GPPGGGKTT.

Belongs to the cytidylate kinase family. Type 2 subfamily.

It is found in the cytoplasm. It carries out the reaction CMP + ATP = CDP + ADP. The catalysed reaction is dCMP + ATP = dCDP + ADP. The chain is Cytidylate kinase from Staphylothermus marinus (strain ATCC 43588 / DSM 3639 / JCM 9404 / F1).